A 464-amino-acid chain; its full sequence is MLSLRSVLKHCLSAKKTCSRNISALYITGDKANENYVTLQPYMDFNKTFGERQFLEQSISSRGLDIRLETVLSKYEKYKTHHAQLSKVAEERERVTKRLKELTKSGSSAVQLEELKEHGKSLRNELKALKQTLYPIEDDFIHDYLHLPNLLHVQCPVGGEEKLLYRHGIPKSENKTTSHLARQELVHFVDNNRYYLMEQAALFDVNAMQSLARYFVNHGHFIQTANPDFVRCVLLEANATPLSDYHLVQEEHLQNKINTAYLTGGASFESYLGAMTKLCVYPSVLPLRYVCCGRSYNRAEADLYGPIPSLYTATQTNAVQIFVATQTDNEADSQLEHILNLATDFYKALDIPFRISYATAADLTPAESIRAVIEVYAPSLQRYVCVGRISNYGDFVSKRILFSTRREKHYDFLHMVGGPVLYTSRLIAALVEHGVRLEDCKLLGSISQKPVHQQDLQQFKDLFT.

This sequence belongs to the class-II aminoacyl-tRNA synthetase family. Type-1 seryl-tRNA synthetase subfamily.

It is found in the mitochondrion. In terms of biological role, essential protein which may play a role in mitochondrial morphogenesis and function. Has transfer RNA (tRNA)-binding activity and can bind tRNA(Ser) but does not have serine--tRNA ligase activity and does not bind ATP. The sequence is that of Serine--tRNA synthetase-like protein Slimp from Drosophila melanogaster (Fruit fly).